The sequence spans 85 residues: Putative membrane protein insertion efficiency factor (85 aa).

The protein belongs to the UPF0161 family.

The protein localises to the cell membrane. Its function is as follows. Could be involved in insertion of integral membrane proteins into the membrane. This chain is Putative membrane protein insertion efficiency factor, found in Leifsonia xyli subsp. xyli (strain CTCB07).